The following is a 32-amino-acid chain: Cytochrome b6-f complex subunit 7 (32 aa).

Residues 9-27 form a helical membrane-spanning segment; it reads AVVFWVLIPVGLAGGALLL.

It belongs to the PetM family. As to quaternary structure, the 4 large subunits of the cytochrome b6-f complex are cytochrome b6, subunit IV (17 kDa polypeptide, PetD), cytochrome f and the Rieske protein, while the 4 small subunits are PetG, PetL, PetM and PetN. The complex functions as a dimer.

It localises to the cellular thylakoid membrane. Functionally, component of the cytochrome b6-f complex, which mediates electron transfer between photosystem II (PSII) and photosystem I (PSI), cyclic electron flow around PSI, and state transitions. This is Cytochrome b6-f complex subunit 7 from Synechococcus sp. (strain CC9311).